The sequence spans 339 residues: Fructose-1,6-bisphosphatase class 1 (339 aa).

4 residues coordinate Mg(2+): Glu91, Asp113, Leu115, and Asp116. Residues 116–119 (DGSS), Asn208, and Lys274 contribute to the substrate site. Residue Glu280 coordinates Mg(2+).

Belongs to the FBPase class 1 family. Homotetramer. Mg(2+) is required as a cofactor.

It is found in the cytoplasm. It carries out the reaction beta-D-fructose 1,6-bisphosphate + H2O = beta-D-fructose 6-phosphate + phosphate. The protein operates within carbohydrate biosynthesis; gluconeogenesis. In Cupriavidus pinatubonensis (strain JMP 134 / LMG 1197) (Cupriavidus necator (strain JMP 134)), this protein is Fructose-1,6-bisphosphatase class 1.